A 328-amino-acid chain; its full sequence is Carbonic anhydrase-related protein 11 (328 aa).

Residues 1 to 23 (MGAAARLSAPRALVLWAALGAAA) form the signal peptide. The 271-residue stretch at 33–303 (DWWSYKDNLQ…LAHRALRGNR (271 aa)) folds into the Alpha-carbonic anhydrase domain. Asn118, Asn170, and Asn260 each carry an N-linked (GlcNAc...) asparagine glycan. The disordered stretch occupies residues 299-328 (LRGNRDPRHPERRCRGPNYRLHVDGAPHGR). Over residues 319 to 328 (LHVDGAPHGR) the composition is skewed to basic and acidic residues.

Belongs to the alpha-carbonic anhydrase family.

It is found in the secreted. In terms of biological role, does not have a catalytic activity. This is Carbonic anhydrase-related protein 11 (CA11) from Pongo abelii (Sumatran orangutan).